A 109-amino-acid polypeptide reads, in one-letter code: MSLLEITDAEFEQETQGQTKPVLVYFWASWCGPCRLMAPAIQAIAKDYGDKLKVLKLEVDPNPAAVAQCKVEGVPALRLFKNNELVMTHEGAIAKPKLLELLKEELDFI.

One can recognise a Thioredoxin domain in the interval Ser2 to Asp107. Cys31 and Cys34 form a disulfide bridge.

The protein belongs to the thioredoxin family.

The sequence is that of Thioredoxin-like protein slr1139 from Synechocystis sp. (strain ATCC 27184 / PCC 6803 / Kazusa).